A 688-amino-acid chain; its full sequence is Elongation factor G (688 aa).

In terms of domain architecture, tr-type G spans 6-280 (KLFRNFGIMA…AVVDFLPSPI (275 aa)). GTP-binding positions include 15–22 (AHIDAGKT), 79–83 (DTPGH), and 133–136 (NKMD).

This sequence belongs to the TRAFAC class translation factor GTPase superfamily. Classic translation factor GTPase family. EF-G/EF-2 subfamily.

It is found in the cytoplasm. Its function is as follows. Catalyzes the GTP-dependent ribosomal translocation step during translation elongation. During this step, the ribosome changes from the pre-translocational (PRE) to the post-translocational (POST) state as the newly formed A-site-bound peptidyl-tRNA and P-site-bound deacylated tRNA move to the P and E sites, respectively. Catalyzes the coordinated movement of the two tRNA molecules, the mRNA and conformational changes in the ribosome. This is Elongation factor G from Ureaplasma urealyticum serovar 10 (strain ATCC 33699 / Western).